A 655-amino-acid chain; its full sequence is p-hydroxybenzoic acid efflux pump subunit AaeB (655 aa).

Helical transmembrane passes span 13 to 33, 38 to 58, 69 to 89, 93 to 113, 121 to 141, 152 to 172, 370 to 390, 407 to 427, 431 to 451, 459 to 479, and 482 to 502; these read FAVKLACAIVLALFVGFHFQL, WAVLTAAIVAAGPAFAAGGEP, LRIIGTFIGCIAALTIIITMI, LLMILVCCIWAGFCTWISSLV, WGLSGYTALIIVITIQAEPLL, EIVIGIVCAIMADLLFSPRSV, LFWLWTGWTSGSGAMVMIAVV, FIYGTLAALPLGLLYFLVIIP, QSMLLLCLSLAVLGFFLGIEV, MGALASTINIIVLDNPMTFHF, and FLDSALGQIVGCMMAFIVILL.

Belongs to the aromatic acid exporter ArAE (TC 2.A.85) family.

It is found in the cell inner membrane. In terms of biological role, forms an efflux pump with AaeA. Could function as a metabolic relief valve, allowing to eliminate certain compounds when they accumulate to high levels in the cell. This is p-hydroxybenzoic acid efflux pump subunit AaeB from Citrobacter koseri (strain ATCC BAA-895 / CDC 4225-83 / SGSC4696).